Here is a 75-residue protein sequence, read N- to C-terminus: Defensin-like protein 58 (75 aa).

Residues 1–23 form the signal peptide; the sequence is MNITKRYVVIFFLVMLTKSLSNS. Disulfide bonds link Cys-39–Cys-73, Cys-43–Cys-66, Cys-52–Cys-71, and Cys-56–Cys-72.

Belongs to the DEFL family.

The protein resides in the secreted. The chain is Defensin-like protein 58 from Arabidopsis thaliana (Mouse-ear cress).